The primary structure comprises 2883 residues: Desmoplakin (2883 aa).

The interval 1–21 is disordered; it reads MSCNGGSHPRINTLGRMTRAE. Residues 1 to 596 are interaction with PKP1, JUP, PKP2; it reads MSCNGGSHPR…DYMKTIEDLE (596 aa). Positions 1 to 1068 are globular 1; sequence MSCNGGSHPR…ANSENCNKNK (1068 aa). Residue S22 is modified to Phosphoserine. T59 is modified (phosphothreonine). The residue at position 65 (S65) is a Phosphoserine. At Y68 the chain carries Phosphotyrosine. T73 is modified (phosphothreonine). A phosphoserine mark is found at S177, S178, and S188. Spectrin repeat units follow at residues 190 to 283 and 284 to 387; these read SGWD…HLRQ and LQNI…LKEN. A Spectrin 3a repeat occupies 388–458; sequence AAYFQFFEEA…NLVNKSKKIV (71 aa). Residues 470-527 form the SH3 domain; the sequence is NKPIILRALCDYKQDQKIVHKGDECILKDNNERSKWYVTGPGGVDMLVPSVGLIIPPP. Residues 528-557 form a Spectrin 3b repeat; sequence NPLAVDLSCKIEQYYEAILALWNQLYINMK. Spectrin repeat units follow at residues 558-639, 666-781, and 782-895; these read SLVS…IQLP, VIET…SLCS, and VRAL…DLEK. A coiled-coil region spans residues 1034 to 1956; the sequence is KSLEDLKLKN…LQKEIEKLRQ (923 aa). The segment at 1069–1957 is central fibrous rod domain; it reads FLDQNLQKYQ…QKEIEKLRQR (889 aa). Residues S1670, S1720, and S2036 each carry the phosphoserine modification. Residues 1958 to 2882 form a globular 2 region; it reads PYGSHRETQT…YSFSSSSIGG (925 aa). A 4.5 X 38 AA tandem repeats (Domain A) region spans residues 1972–2220; sequence TVDSSKLVFD…LLLSVQKRSM (249 aa). Plectin repeat units lie at residues 2021-2057, 2058-2095, 2096-2133, 2134-2171, 2175-2209, 2210-2245, 2263-2300, 2301-2338, 2339-2376, 2377-2414, 2418-2452, 2468-2505, 2519-2556, 2622-2659, 2660-2697, 2736-2773, and 2774-2811; these read QPFLRGAGAIAGASASPKEKYSLVEAKRKKFITPEST, VMLLEAQAATGGIIDPHRNEKLTVDNAVARDLIDFDDR, QQIYTAEKAITGFDDPFSGKTVSVSEAIKKNLIDRETG, MRLLEAQLASGGVVDPVNSVFLPKDVALARGLIDRDLY, NDPRDSQKNFVDPITKKKVSYMQLRERCRIEPHTG, LLLLSVQKRSMSFQGIRQPVTVTELVDSGILRPSTV, KDFLQGSSCIAGIYNETTKQKLGIYEAMKIGLVRPGTA, LELLEAQAATGFIVDPVSNLRLPVEEAYKRGLVGIEFK, EKLLSAERAVTGYNDPETGNIISLFQAMNKELIEKGHG, IRLLEAQIATGGIIDPKESHRLPVDMAYKRGYFNEELS, SDPSDDTKGFFDPNTEENLTYLQLKERCIKDEETG, SQKNTLRKRRVVIVDPETNKEMSVQEAYKKGLIDYDTF, TITGSDGSTRVVLVDRKTGSQYDIQDAIDKGLVDRKFF, SDPLEESSPIAAIFDTENLEKISIAEGIERGIVDSITG, QRLLEAQACTGGIIHPTTGQKLSLQDAVNQGLIDQDMA, QRFLEFQFLTGGLVDPEVHGRISTEEAIRKGFIDGRAA, and QRLQDISSYAKILTCPKTKLKISYKDAMNRSMVEDITG. Phosphoserine occurs at positions 2219, 2221, and 2237. The tract at residues 2256-2458 is 4.5 X 38 AA tandem repeats (Domain B); that stretch reads DEVGERIKDF…EETGLCLLPL (203 aa). Q2492 carries the Omega-hydroxyceramide glutamate ester lipid modification. The tract at residues 2621 to 2833 is 4.5 X 38 AA tandem repeats (Domain C); the sequence is LSDPLEESSP…GLPSPYNMSA (213 aa). Phosphoserine is present on residues S2822 and S2827. Residues 2822–2883 form a disordered region; the sequence is SKGLPSPYNM…SFSSSSIGGY (62 aa). Residue Y2829 is modified to Phosphotyrosine. S2832 and S2836 each carry phosphoserine. Residues 2835–2858 are 6 X 4 AA tandem repeats of G-S-R-[SR]; that stretch reads GSRSGSRSGSRSGSRSGSRSGSRR. A compositionally biased stretch (low complexity) spans 2835–2858; sequence GSRSGSRSGSRSGSRSGSRSGSRR. An omega-N-methylarginine mark is found at R2837 and R2858. Phosphoserine is present on S2860. A Phosphothreonine modification is found at T2864. Over residues 2867–2883 the composition is skewed to low complexity; that stretch reads SSYSYSYSFSSSSIGGY. S2879 is modified (phosphoserine).

Belongs to the plakin or cytolinker family. As to quaternary structure, homodimer. Interacts with COL17A1 (via cytoplasmic region). Interacts with DSC2. Interacts with PKP1. Interacts with PKP2. Interacts weakly with TMEM65. Post-translationally, phosphorylation at Ser-2860 increases association with intermediate filament cytokeratin, potentially facilitating interaction between desmosome junctions and intermediate filament architecture. In terms of tissue distribution, expressed in undifferentiated keratinocytes of the epidermis at birth, expression increases as differentiation proceeds (at protein level). Abundantly expressed in the suprabasal layers and weakly in the basal layers of the outer hair root sheath (at protein level). Expressed at intercalated disks in cardiomyocytes (at protein level).

Its subcellular location is the cell junction. The protein resides in the desmosome. The protein localises to the cell membrane. It localises to the cytoplasm. Functionally, major high molecular weight protein of desmosomes. Regulates profibrotic gene expression in cardiomyocytes via activation of the MAPK14/p38 MAPK signaling cascade and increase in TGFB1 protein abundance. The polypeptide is Desmoplakin (Mus musculus (Mouse)).